The following is a 321-amino-acid chain: uncharacterized protein (321 aa).

An N-terminal signal peptide occupies residues Met-1–Ala-22.

This sequence belongs to the bacterial solute-binding protein 1 family. WtpA subfamily.

This is an uncharacterized protein from Petrotoga mobilis (strain DSM 10674 / SJ95).